A 246-amino-acid polypeptide reads, in one-letter code: Ubiquinone biosynthesis O-methyltransferase (246 aa).

The S-adenosyl-L-methionine site is built by R36, G60, D81, and L123.

It belongs to the methyltransferase superfamily. UbiG/COQ3 family.

It carries out the reaction a 3-demethylubiquinol + S-adenosyl-L-methionine = a ubiquinol + S-adenosyl-L-homocysteine + H(+). The enzyme catalyses a 3-(all-trans-polyprenyl)benzene-1,2-diol + S-adenosyl-L-methionine = a 2-methoxy-6-(all-trans-polyprenyl)phenol + S-adenosyl-L-homocysteine + H(+). The protein operates within cofactor biosynthesis; ubiquinone biosynthesis. Functionally, O-methyltransferase that catalyzes the 2 O-methylation steps in the ubiquinone biosynthetic pathway. This chain is Ubiquinone biosynthesis O-methyltransferase, found in Rickettsia typhi (strain ATCC VR-144 / Wilmington).